The chain runs to 322 residues: Gluconeogenesis factor (322 aa).

NAD(+) contacts are provided by residues T13, 217–219 (NVM), 263–267 (KYAKE), and 300–301 (RH).

Belongs to the gluconeogenesis factor family.

It is found in the cytoplasm. Its function is as follows. Required for morphogenesis under gluconeogenic growth conditions. In Halalkalibacterium halodurans (strain ATCC BAA-125 / DSM 18197 / FERM 7344 / JCM 9153 / C-125) (Bacillus halodurans), this protein is Gluconeogenesis factor.